Consider the following 327-residue polypeptide: Zinc transport protein ZntB (327 aa).

The Cytoplasmic portion of the chain corresponds to 1–273 (MEAIKGADVN…ARRTYTMSLM (273 aa)). The helical transmembrane segment at 274–294 (AMVFLPSTFLTGLFGVNLGGI) threads the bilayer. The Periplasmic portion of the chain corresponds to 295–300 (PGGGWR). Residues 301-321 (FGFSLFCILLVVLIGGVALWL) form a helical membrane-spanning segment. The Cytoplasmic segment spans residues 322–327 (HRSKWL).

This sequence belongs to the CorA metal ion transporter (MIT) (TC 1.A.35) family.

It is found in the cell inner membrane. It catalyses the reaction Zn(2+)(out) + H(+)(out) = Zn(2+)(in) + H(+)(in). Zinc transporter. Acts as a Zn(2+):proton symporter, which likely mediates zinc ion uptake. The polypeptide is Zinc transport protein ZntB (Escherichia fergusonii (strain ATCC 35469 / DSM 13698 / CCUG 18766 / IAM 14443 / JCM 21226 / LMG 7866 / NBRC 102419 / NCTC 12128 / CDC 0568-73)).